A 210-amino-acid polypeptide reads, in one-letter code: Uracil phosphoribosyltransferase (210 aa).

5-phospho-alpha-D-ribose 1-diphosphate contacts are provided by residues R80, R105, and 132–140 (DPMLATGGS). Residues I195 and 200-202 (GDA) contribute to the uracil site. D201 lines the 5-phospho-alpha-D-ribose 1-diphosphate pocket.

Belongs to the UPRTase family. Mg(2+) serves as cofactor.

The catalysed reaction is UMP + diphosphate = 5-phospho-alpha-D-ribose 1-diphosphate + uracil. The protein operates within pyrimidine metabolism; UMP biosynthesis via salvage pathway; UMP from uracil: step 1/1. With respect to regulation, allosterically activated by GTP. Its function is as follows. Catalyzes the conversion of uracil and 5-phospho-alpha-D-ribose 1-diphosphate (PRPP) to UMP and diphosphate. The protein is Uracil phosphoribosyltransferase of Deinococcus radiodurans (strain ATCC 13939 / DSM 20539 / JCM 16871 / CCUG 27074 / LMG 4051 / NBRC 15346 / NCIMB 9279 / VKM B-1422 / R1).